The sequence spans 358 residues: Heme A synthase (358 aa).

8 consecutive transmembrane segments (helical) span residues 25-45 (LVRY…MVGG), 111-131 (LLAR…WLTG), 141-161 (MLGL…MVAS), 176-196 (IHLT…RGLV), 210-230 (FAGW…LVAG), 269-289 (VQFV…LHAV), 304-324 (TIVL…TLLM), and 326-346 (APLH…AFAV). Histidine 273 lines the heme pocket. Histidine 334 is a binding site for heme.

The protein belongs to the COX15/CtaA family. Type 2 subfamily. Interacts with CtaB. Heme b serves as cofactor.

It is found in the cell membrane. It carries out the reaction Fe(II)-heme o + 2 A + H2O = Fe(II)-heme a + 2 AH2. It functions in the pathway porphyrin-containing compound metabolism; heme A biosynthesis; heme A from heme O: step 1/1. Its function is as follows. Catalyzes the conversion of heme O to heme A by two successive hydroxylations of the methyl group at C8. The first hydroxylation forms heme I, the second hydroxylation results in an unstable dihydroxymethyl group, which spontaneously dehydrates, resulting in the formyl group of heme A. The chain is Heme A synthase from Brucella abortus (strain S19).